The chain runs to 536 residues: Glycine-rich extracellular protein 1 (536 aa).

Positions methionine 1–glycine 22 are cleaved as a signal peptide. Disordered regions lie at residues alanine 111 to asparagine 134, glycine 306 to tryptophan 336, and glycine 500 to cysteine 536. Gly residues predominate over residues phenylalanine 115–lysine 124. The segment covering glycine 521 to cysteine 536 has biased composition (gly residues).

This is Glycine-rich extracellular protein 1 from Homo sapiens (Human).